The following is a 212-amino-acid chain: Large ribosomal subunit protein uL3 (212 aa).

It belongs to the universal ribosomal protein uL3 family. As to quaternary structure, part of the 50S ribosomal subunit. Forms a cluster with proteins L14 and L19.

Functionally, one of the primary rRNA binding proteins, it binds directly near the 3'-end of the 23S rRNA, where it nucleates assembly of the 50S subunit. The protein is Large ribosomal subunit protein uL3 of Acetivibrio thermocellus (strain ATCC 27405 / DSM 1237 / JCM 9322 / NBRC 103400 / NCIMB 10682 / NRRL B-4536 / VPI 7372) (Clostridium thermocellum).